Reading from the N-terminus, the 1047-residue chain is MVGNDWVNSYLEAILAAEPGIANSKPPGTGDSKSSLLLRERGHFSPTRYFVEEVITGFDETDLHRSWVQAAATRSPQERNTRLENLCWRIWNLARQKKQVEGKNAKREAKREREREKARREVTAEMSEDFSEGEKADLPGEIPTPSDNNTKGRMSRISSVDVFENWFAQHKEKKLYIVLISLHGLIRGENMELGRDSDTGGQVKYVVELARALGSMPGVYRVDLLTRQVTAPDVDSSYSEPSEMLNPIDTDIEQENGESSGAYIIRIPFGPKDKYVPKELLWPHIPEFVDRALSHIMQISKVLGEQIGGGQQVWPVSIHGHYADAGDSTALLSGALNVPMVFTGHSLGRDKLEQLLKQGRPKEEINSNYKIWRRIEAEELCLDASEIVITSTRQEVDEQWRLYDGFDPVLERKLRARMKRGVSCLGRFMPRMVVIPPGMEFHHIVPHDVDADGDDENPQTADPPIWSEIMRFFSNPRKPMILALARPDPKKNLVTLVKAFGECRPLRELANLTLIMGNRNDIDELSSTNSSVLLSILKLIDKYDLYGQVAMPKHHQQSDVPEIYRLAAKTKGVFINPAFIEPFGLTLIEAGAHGLPTVATINGGPVDIHRVLDNGLLVDPHDQQAIADALLKLVSDRQLWGRCRQNGLNNIHLFSWPEHCKTYLARIASCKQRHPKWQRVEFENSDSDSPSDSLRDINDISLNLKLSLDGEKSGSNNGVDTNLDAEDRAAERKAEVEKAVSTLAQKSKPTEKFDSKMPTLKRRKNIFVISVDCSATSDLLAVVKTVIDAAGRGSSTGFILSTSMTISETHTALLSGGLKPQDFDAVICSSGSELYFTSSGSEDKTALPYTLDADYHSHIEFRWGGESLRKTLIRWISSVEEKKKTKKGEILVEDESSSTNYCLSFKVKDPALMPPMKELRKLMRNQALRCNAVYCQNGARLNVIPVLASRSQALRYLLVRWGIDLSNMVVFVGDSGDTDYEGLLGGIHKTVILKGLASDLREQPGNRSYPMEDVTPLNSPNITEAKECGRDAIKVALEKLGISLLKP.

Over residues 101-123 (EGKNAKREAKREREREKARREVT) the composition is skewed to basic and acidic residues. The segment at 101–153 (EGKNAKREAKREREREKARREVTAEMSEDFSEGEKADLPGEIPTPSDNNTKGR) is disordered. Phosphoserine occurs at positions 127, 131, and 159. Residues 712–731 (KSGSNNGVDTNLDAEDRAAE) are disordered.

This sequence belongs to the glycosyltransferase 1 family. In terms of assembly, homodimer or homotetramer. As to expression, expressed in roots, cauline leaves, flower buds, flowers and anthers. Highly expressed in maturing nectaries.

The enzyme catalyses beta-D-fructose 6-phosphate + UDP-alpha-D-glucose = sucrose 6(F)-phosphate + UDP + H(+). It functions in the pathway glycan biosynthesis; sucrose biosynthesis; sucrose from D-fructose 6-phosphate and UDP-alpha-D-glucose: step 1/2. Activity is regulated by phosphorylation and moderated by concentration of metabolites and light. In terms of biological role, plays a role in photosynthetic sucrose synthesis by catalyzing the rate-limiting step of sucrose biosynthesis from UDP-glucose and fructose- 6-phosphate. Involved in the regulation of carbon partitioning in the leaves of plants. May regulate the synthesis of sucrose and therefore play a major role as a limiting factor in the export of photoassimilates out of the leaf. Plays a role for sucrose availability that is essential for plant growth and fiber elongation. Required for nectar secretion. In Arabidopsis thaliana (Mouse-ear cress), this protein is Probable sucrose-phosphate synthase 2 (SPS2).